A 130-amino-acid polypeptide reads, in one-letter code: Fluoride-specific ion channel FluC (130 aa).

4 helical membrane passes run Val-7–Trp-27, Leu-36–Phe-56, Ala-69–Val-89, and Leu-99–Ile-119. Gly-76 and Thr-79 together coordinate Na(+).

The protein belongs to the fluoride channel Fluc/FEX (TC 1.A.43) family.

It localises to the cell inner membrane. It catalyses the reaction fluoride(in) = fluoride(out). With respect to regulation, na(+) is not transported, but it plays an essential structural role and its presence is essential for fluoride channel function. Fluoride-specific ion channel. Important for reducing fluoride concentration in the cell, thus reducing its toxicity. This chain is Fluoride-specific ion channel FluC, found in Albidiferax ferrireducens (strain ATCC BAA-621 / DSM 15236 / T118) (Rhodoferax ferrireducens).